The sequence spans 541 residues: Valine N-monooxygenase 2 (541 aa).

Over Met-1–Thr-18 the chain is Cytoplasmic. A helical transmembrane segment spans residues Ser-19 to Ile-41. Topologically, residues Lys-42 to Pro-541 are lumenal. Residue Asn-277 is glycosylated (N-linked (GlcNAc...) asparagine). Cys-477 is a heme binding site. Residue Asn-505 is glycosylated (N-linked (GlcNAc...) asparagine).

This sequence belongs to the cytochrome P450 family. The cofactor is heme. As to expression, expressed in the epidermis, the next two cortex cell layers, the endodermis and the pericycle of leaf petioles. Strong expression around the laticifers among the phloem cells and in parenchymatic cells between the protoxylem and the metaxylem cells. In the leaves, preferentially expressed in the mesophyll cells adjacent to the epidermis.

The protein localises to the microsome membrane. It catalyses the reaction L-valine + 2 reduced [NADPH--hemoprotein reductase] + 2 O2 = (E)-2-methylpropanal oxime + 2 oxidized [NADPH--hemoprotein reductase] + CO2 + 3 H2O + 2 H(+). It carries out the reaction L-valine + reduced [NADPH--hemoprotein reductase] + O2 = N-hydroxy-L-valine + oxidized [NADPH--hemoprotein reductase] + H2O + 2 H(+). The catalysed reaction is N-hydroxy-L-valine + reduced [NADPH--hemoprotein reductase] + O2 = N,N-dihydroxy-L-valine + oxidized [NADPH--hemoprotein reductase] + H2O + H(+). The enzyme catalyses L-isoleucine + 2 reduced [NADPH--hemoprotein reductase] + 2 O2 = (1E,2S)-2-methylbutanal oxime + 2 oxidized [NADPH--hemoprotein reductase] + CO2 + 3 H2O + 2 H(+). It catalyses the reaction L-isoleucine + reduced [NADPH--hemoprotein reductase] + O2 = N-hydroxy-L-isoleucine + oxidized [NADPH--hemoprotein reductase] + H2O + 2 H(+). It carries out the reaction N-hydroxy-L-isoleucine + reduced [NADPH--hemoprotein reductase] + O2 = N,N-dihydroxy-L-isoleucine + oxidized [NADPH--hemoprotein reductase] + H2O + H(+). Involved in the biosynthesis of the cyanogenic glucosides linamarin and lotaustralin. Can use L-valine or L-isoleucine as substrate. Catalyzes multi-step reactions starting with two successive N-hydroxylations using L-valine and L-isoleucine as substrates leading to the formation of N,N-dihydroxy-L-valine and N,N-dihydroxy-L-isoleucine, respectively; following spontaneous reactions lead to the production of (E)-2-methylpropanal oxime and (1E,2S)-2-methylbutanal oxime, respectively. This chain is Valine N-monooxygenase 2, found in Manihot esculenta (Cassava).